The chain runs to 98 residues: NADH-ubiquinone oxidoreductase chain 4L (98 aa).

Transmembrane regions (helical) follow at residues 1–21 (MSIV…GMLI), 29–49 (SLLC…LIIL), and 61–81 (IILL…LVMV).

Belongs to the complex I subunit 4L family. Core subunit of respiratory chain NADH dehydrogenase (Complex I) which is composed of 45 different subunits.

The protein resides in the mitochondrion inner membrane. The enzyme catalyses a ubiquinone + NADH + 5 H(+)(in) = a ubiquinol + NAD(+) + 4 H(+)(out). Core subunit of the mitochondrial membrane respiratory chain NADH dehydrogenase (Complex I) which catalyzes electron transfer from NADH through the respiratory chain, using ubiquinone as an electron acceptor. Part of the enzyme membrane arm which is embedded in the lipid bilayer and involved in proton translocation. The sequence is that of NADH-ubiquinone oxidoreductase chain 4L (MT-ND4L) from Herpestes javanicus (Small Indian mongoose).